The primary structure comprises 291 residues: Pentonolactonase XacC (291 aa).

Glu-15, Asn-141, and Asp-191 together coordinate a divalent metal cation. The active-site Proton donor/acceptor is the Asp-191.

The protein belongs to the SMP-30/CGR1 family. As to quaternary structure, monomer. The cofactor is a divalent metal cation.

It catalyses the reaction L-arabinono-1,4-lactone + H2O = L-arabinonate + H(+). The enzyme catalyses D-xylono-1,4-lactone + H2O = D-xylonate + H(+). It functions in the pathway carbohydrate degradation. Pentonolactonase involved in D-arabinose and D-xylose catabolism. Catalyzes the hydrolysis of both L-arabino-gamma-lactone and D-xylono-gamma-lactone to the corresponding acids. Can also hydrolyze D-galactono-gamma-lactone and D-glucono-delta-lactone. The polypeptide is Pentonolactonase XacC (Haloferax volcanii (strain ATCC 29605 / DSM 3757 / JCM 8879 / NBRC 14742 / NCIMB 2012 / VKM B-1768 / DS2) (Halobacterium volcanii)).